The following is a 940-amino-acid chain: Protein translocase subunit SecA (940 aa).

ATP-binding positions include Q86, 104 to 108 (GEGKT), and D494. The interval 884 to 940 (ATAKAQKDQQAEDAVLVGEDEPETPQGPPARGAFGQPTGASSAPQNREERRKADRRK) is disordered. Over residues 929 to 940 (NREERRKADRRK) the composition is skewed to basic and acidic residues.

It belongs to the SecA family. As to quaternary structure, monomer and homodimer. Part of the essential Sec protein translocation apparatus which comprises SecA, SecYEG and auxiliary proteins SecDF. Other proteins may also be involved.

It localises to the cell membrane. The protein resides in the cytoplasm. It catalyses the reaction ATP + H2O + cellular proteinSide 1 = ADP + phosphate + cellular proteinSide 2.. In terms of biological role, part of the Sec protein translocase complex. Interacts with the SecYEG preprotein conducting channel. Has a central role in coupling the hydrolysis of ATP to the transfer of proteins into and across the cell membrane, serving as an ATP-driven molecular motor driving the stepwise translocation of polypeptide chains across the membrane. The polypeptide is Protein translocase subunit SecA (Clavibacter sepedonicus (Clavibacter michiganensis subsp. sepedonicus)).